Consider the following 95-residue polypeptide: uncharacterized protein (95 aa).

This is an uncharacterized protein from Acidianus hospitalis (AFV-1).